The following is a 259-amino-acid chain: Acetylglutamate kinase (259 aa).

Substrate contacts are provided by residues 45–46 (GG), Arg-67, and Asn-159.

The protein belongs to the acetylglutamate kinase family. ArgB subfamily.

It localises to the cytoplasm. The catalysed reaction is N-acetyl-L-glutamate + ATP = N-acetyl-L-glutamyl 5-phosphate + ADP. It participates in amino-acid biosynthesis; L-arginine biosynthesis; N(2)-acetyl-L-ornithine from L-glutamate: step 2/4. In terms of biological role, catalyzes the ATP-dependent phosphorylation of N-acetyl-L-glutamate. The chain is Acetylglutamate kinase from Aeromonas hydrophila subsp. hydrophila (strain ATCC 7966 / DSM 30187 / BCRC 13018 / CCUG 14551 / JCM 1027 / KCTC 2358 / NCIMB 9240 / NCTC 8049).